The chain runs to 904 residues: Copper-transporting ATPase ccc2 (904 aa).

At 1-172 (MYTTTLSVQG…GSQIRVWKIR (172 aa)) the chain is on the cytoplasmic side. The HMA domain maps to 2–68 (YTTTLSVQGM…KIEDCGFDAS (67 aa)). 2 residues coordinate Cu(+): cysteine 13 and cysteine 16. A helical membrane pass occupies residues 173-193 (FIISISFSLAVMFLPQIFDSC). At 194–197 (DSMR) the chain is on the lumenal, vesicle side. The chain crosses the membrane as a helical span at residues 198–218 (AAFLVPHYFGICAGHIISLVL). Over 219–246 (SLPVQFGVGRVYYSAAYHALKRGTANMD) the chain is Cytoplasmic. Residues 247-267 (VLVSLGSTVAFAASIFFMILY) form a helical membrane-spanning segment. At 268-278 (SARHADNPAPI) the chain is on the lumenal, vesicle side. A helical membrane pass occupies residues 279–296 (FFDTADMLLTFVTLGRYL). Over 297–431 (ESKAKGSTSA…PIQQFADRVA (135 aa)) the chain is Cytoplasmic. A helical transmembrane segment spans residues 432 to 452 (GIFVPVIVALSISTFTFWFLF). At 453 to 469 (TKYSSKYPSVFDDPMGK) the chain is on the lumenal, vesicle side. A helical membrane pass occupies residues 470–490 (FAVCLKLTISVVVVACPCALG). Topologically, residues 491-805 (LSTPTAVMVG…RIKMNLVWAC (315 aa)) are cytoplasmic. Aspartate 529 serves as the catalytic 4-aspartylphosphate intermediate. Residues aspartate 742 and aspartate 746 each contribute to the Mg(2+) site. Residues 806 to 826 (IYNFVMIPIAMGFFLPWGIYL) traverse the membrane as a helical segment. Over 827–828 (NP) the chain is Lumenal, vesicle. The chain crosses the membrane as a helical span at residues 829–849 (MWASAAMMFSSLSVLASSLLL). Topologically, residues 850-904 (RRWKKPKSLIFSEADDVETESSTNSSVLQKVYTATRSIFGRNKSSNKYQPVANEV) are cytoplasmic.

This sequence belongs to the cation transport ATPase (P-type) (TC 3.A.3) family. Type IB subfamily.

It localises to the golgi apparatus. The protein localises to the trans-Golgi network membrane. The catalysed reaction is Cu(+)(in) + ATP + H2O = Cu(+)(out) + ADP + phosphate + H(+). Probably involved in copper transport and in the regulation of cellular copper level. Retrieves copper from the metallochaperone atx1 and incorporates it into trans-Golgi vesicles. The protein is Copper-transporting ATPase ccc2 (ccc2) of Schizosaccharomyces pombe (strain 972 / ATCC 24843) (Fission yeast).